The sequence spans 629 residues: Bifunctional protein ArgHA (629 aa).

The argininosuccinate lyase stretch occupies residues 1–499 (MALWGGRFSQ…NLPRSRSDLV (499 aa)). The region spanning 464 to 598 (ISIRAARLTD…EKVLKDCDMC (135 aa)) is the N-acetyltransferase domain. Residues 500-629 (KAVGTFAVTE…INLKAEKLAS (130 aa)) form an amino-acid acetyltransferase region.

The protein in the N-terminal section; belongs to the lyase 1 family. Argininosuccinate lyase subfamily. This sequence in the C-terminal section; belongs to the acetyltransferase family. ArgA subfamily.

The protein resides in the cytoplasm. The catalysed reaction is 2-(N(omega)-L-arginino)succinate = fumarate + L-arginine. The enzyme catalyses L-glutamate + acetyl-CoA = N-acetyl-L-glutamate + CoA + H(+). It participates in amino-acid biosynthesis; L-arginine biosynthesis; N(2)-acetyl-L-ornithine from L-glutamate: step 1/4. Its pathway is amino-acid biosynthesis; L-arginine biosynthesis; L-arginine from L-ornithine and carbamoyl phosphate: step 3/3. This Moritella abyssi protein is Bifunctional protein ArgHA (argHA).